The chain runs to 737 residues: Catalase-peroxidase (737 aa).

The disordered stretch occupies residues 1–33; it reads MPEATEHPPIGEAQTEPAQSGCPMVIKPPVEGG. The segment at residues 107 to 235 is a cross-link (tryptophyl-tyrosyl-methioninium (Trp-Tyr) (with M-261)); it reads WHAAGTYRVQ…LGASHMGLIY (129 aa). Catalysis depends on His-108, which acts as the Proton acceptor. Residues 235-261 constitute a cross-link (tryptophyl-tyrosyl-methioninium (Tyr-Met) (with W-107)); sequence YVNPEGPEGNPDPIAAAIDIRETFGRM. His-276 serves as a coordination point for heme.

Belongs to the peroxidase family. Peroxidase/catalase subfamily. Homodimer or homotetramer. It depends on heme b as a cofactor. Post-translationally, formation of the three residue Trp-Tyr-Met cross-link is important for the catalase, but not the peroxidase activity of the enzyme.

It catalyses the reaction H2O2 + AH2 = A + 2 H2O. It carries out the reaction 2 H2O2 = O2 + 2 H2O. Its function is as follows. Bifunctional enzyme with both catalase and broad-spectrum peroxidase activity. May play a role in polycyclic aromatic hydrocarbon (PAH) metabolism. This Mycolicibacterium vanbaalenii (Mycobacterium vanbaalenii) protein is Catalase-peroxidase.